The sequence spans 503 residues: Aspartyl/glutamyl-tRNA(Asn/Gln) amidotransferase subunit B (503 aa).

The protein belongs to the GatB/GatE family. GatB subfamily. In terms of assembly, heterotrimer of A, B and C subunits.

It carries out the reaction L-glutamyl-tRNA(Gln) + L-glutamine + ATP + H2O = L-glutaminyl-tRNA(Gln) + L-glutamate + ADP + phosphate + H(+). The enzyme catalyses L-aspartyl-tRNA(Asn) + L-glutamine + ATP + H2O = L-asparaginyl-tRNA(Asn) + L-glutamate + ADP + phosphate + 2 H(+). Allows the formation of correctly charged Asn-tRNA(Asn) or Gln-tRNA(Gln) through the transamidation of misacylated Asp-tRNA(Asn) or Glu-tRNA(Gln) in organisms which lack either or both of asparaginyl-tRNA or glutaminyl-tRNA synthetases. The reaction takes place in the presence of glutamine and ATP through an activated phospho-Asp-tRNA(Asn) or phospho-Glu-tRNA(Gln). In Cereibacter sphaeroides (strain ATCC 17029 / ATH 2.4.9) (Rhodobacter sphaeroides), this protein is Aspartyl/glutamyl-tRNA(Asn/Gln) amidotransferase subunit B.